The primary structure comprises 154 residues: Ribonuclease H (154 aa).

The RNase H type-1 domain occupies 3-144 (ELPVVSIFTD…ADQLARDGVA (142 aa)). Aspartate 12, glutamate 50, aspartate 72, and aspartate 136 together coordinate Mg(2+).

It belongs to the RNase H family. As to quaternary structure, monomer. Mg(2+) serves as cofactor.

It is found in the cytoplasm. It catalyses the reaction Endonucleolytic cleavage to 5'-phosphomonoester.. Functionally, endonuclease that specifically degrades the RNA of RNA-DNA hybrids. The sequence is that of Ribonuclease H from Bradyrhizobium sp. (strain ORS 278).